Reading from the N-terminus, the 129-residue chain is UPF0325 protein YE3288 (129 aa).

The protein belongs to the UPF0325 family.

The sequence is that of UPF0325 protein YE3288 from Yersinia enterocolitica serotype O:8 / biotype 1B (strain NCTC 13174 / 8081).